Consider the following 430-residue polypeptide: MITDLPKDLIEEILSRVSMTSMRVVRLTCKSWNTLSNSESFKKMHIGKVTSTREGESRVIMLIDYNLFLMSAVLMDDVDPSIEFKGKLSCLKEQVKISQVFHCEGLLLCILKDDTRIVVWNPYRQETRWIIPRYSHRPYVMNNIRYALGYENNKSGRSLKLLRFIDYCYTEKHICWHEIYDFDSDLWTTLDVTPHWYILSNWSCVQGVSLKGNTYWCAREENSDGYNHIICFDFTRERFGPLLPLPVNVIDNEYEYVTSSCVREGKIAALFQHNDSYPYELEIWITTKIEAEMVSWNKFLRIDIEPNNNIMVPFIYGGFFIDEEKKKVALGFDEEFGRKTFNIIGEDGYFREFDRITFNIIEEAGERAGVNCGSYVCSYVPSLVRIKKPAQGKRKRQSSLEKLRFDQNTWIFDSIYQATASQIRRRRPTR.

The region spanning 1-44 (MITDLPKDLIEEILSRVSMTSMRVVRLTCKSWNTLSNSESFKKM) is the F-box domain. 3 Kelch repeats span residues 161-207 (LLRF…CVQG), 312-363 (VPFI…IIEE), and 383-430 (LVRI…RPTR).

The protein is F-box/kelch-repeat protein At4g33290 of Arabidopsis thaliana (Mouse-ear cress).